Reading from the N-terminus, the 196-residue chain is SPRY domain-containing protein 7 (196 aa).

A2 carries the post-translational modification N-acetylalanine. The region spanning 2 to 184 (ATSVLCCLRC…FSEFYHTPPP (183 aa)) is the B30.2/SPRY domain.

This Homo sapiens (Human) protein is SPRY domain-containing protein 7 (SPRYD7).